A 413-amino-acid chain; its full sequence is MGSDVRDMNALLPPVSTLSGNSSCSMPVSSSGQWAPVLDFPPGAPYSSLPPHSFIKQEPTWNPDPHEDQCLSAFTVHFSGQFTGTAGACRYGAFGAPTPSQATTGQARMFPNSPYLSNCLDNQQGMRNQGYSAVAFDGTPSYGHTPSHHTAQFTNHSFKHEDPMGQQTSLGEQQYSVPPPVYGCHTPTDSCTGSQALLLRTPYNSDNLYQMTSQLECMTWNQMNLGSSLKSHGTSYENDSHSTPMLYSCGGQYRIHTHGVFRGIQDVRRVPGVTPAIVRSSTEANEKRPFMCAYPGCNKRYFKLSHLQMHSRKHTGEKPYQCDFKDCERRFSRSDQLKRHQRRHTGIKPFQCKTCQRKFSRSDHLKTHTRTHTGEKPFSCRWPSCQKKFARSDELVRHHNMHQRNMTKLQLAL.

Glycyl lysine isopeptide (Lys-Gly) (interchain with G-Cter in SUMO) cross-links involve residues Lys56 and Lys159. The 9aaTAD signature appears at 218-226 (MTWNQMNLG). C2H2-type zinc fingers lie at residues 290–314 (FMCA…SRKH), 320–344 (YQCD…QRRH), 350–372 (FQCK…TRTH), and 378–402 (FSCR…HNMH). Important for interaction with target DNA regions lie at residues 334-348 (SDQL…TGIK) and 360-368 (SRSDHLKTH).

This sequence belongs to the EGR C2H2-type zinc-finger protein family.

The protein resides in the nucleus. Its subcellular location is the cytoplasm. It is found in the nucleus speckle. Its function is as follows. Transcription factor required for development of the vascular component of the pronephric kidney, the glomus; may repress tubule-specific gene expression in the portion of the pronephros fated to form the glomus. Recognizes and binds to the DNA sequence 5'-GCG(T/G)GGGCG-3'. Inhibits Wnt-signaling during embryonic development. This is Wilms tumor protein homolog (wt1) from Xenopus tropicalis (Western clawed frog).